Here is a 423-residue protein sequence, read N- to C-terminus: Structure-specific endonuclease subunit SLX1 (423 aa).

A GIY-YIG domain is found at 23 to 105 (AFYCCYLLRS…QNTKVSRHAD (83 aa)). 2 disordered regions span residues 300–334 (RRRRQAGTPKGQGLKSVRGRGRGRGHSEDESDALQ) and 365–406 (AHRP…LGLQ).

The protein belongs to the SLX1 family. Forms a heterodimer with SLX4. It depends on a divalent metal cation as a cofactor.

It is found in the nucleus. In terms of biological role, catalytic subunit of the SLX1-SLX4 structure-specific endonuclease that resolves DNA secondary structures generated during DNA repair and recombination. Has endonuclease activity towards branched DNA substrates, introducing single-strand cuts in duplex DNA close to junctions with ss-DNA. This chain is Structure-specific endonuclease subunit SLX1, found in Paracoccidioides brasiliensis (strain Pb03).